The sequence spans 326 residues: Putative ribose-phosphate pyrophosphokinase 2 (326 aa).

ATP contacts are provided by residues 43 to 45 (DGE) and 102 to 103 (RQ). His136 is a binding site for Mg(2+). D-ribose 5-phosphate contacts are provided by residues Asp225 and 229–233 (NTGKT).

As to quaternary structure, homohexamer. Mg(2+) is required as a cofactor.

It localises to the cytoplasm. It catalyses the reaction D-ribose 5-phosphate + ATP = 5-phospho-alpha-D-ribose 1-diphosphate + AMP + H(+). It functions in the pathway metabolic intermediate biosynthesis; 5-phospho-alpha-D-ribose 1-diphosphate biosynthesis; 5-phospho-alpha-D-ribose 1-diphosphate from D-ribose 5-phosphate (route I): step 1/1. Its function is as follows. Involved in the biosynthesis of the central metabolite phospho-alpha-D-ribosyl-1-pyrophosphate (PRPP) via the transfer of pyrophosphoryl group from ATP to 1-hydroxyl of ribose-5-phosphate (Rib-5-P). The polypeptide is Putative ribose-phosphate pyrophosphokinase 2 (Streptococcus pyogenes serotype M6 (strain ATCC BAA-946 / MGAS10394)).